Consider the following 686-residue polypeptide: Amphiphysin (686 aa).

Coiled-coil stretches lie at residues A10–E83 and D144–L191. The region spanning V24–D240 is the BAR domain. Disordered stretches follow at residues S244–E314, A421–A441, and V483–V597. S252 is subject to Phosphoserine. A Phosphothreonine modification is found at T260. Pro residues predominate over residues P261 to T274. 4 positions are modified to phosphoserine: S262, S268, S272, and S276. T280 carries the post-translational modification Phosphothreonine. The span at E424–A441 shows a compositional bias: low complexity. S500 is modified (phosphoserine). Residues S541–A562 are compositionally biased toward basic and acidic residues. In terms of domain architecture, SH3 spans G613 to E686. S629 is subject to Phosphoserine.

In terms of assembly, heterodimer with BIN1. Binds SH3GLB1. Interacts with REPS1 and SGIP1. Binds AP2A2. Interacts with AP2B1. Interacts with DNM1 and SYNJ1.

Its subcellular location is the cytoplasmic vesicle. The protein localises to the secretory vesicle. The protein resides in the synaptic vesicle membrane. It localises to the cytoplasm. It is found in the cytoskeleton. Its function is as follows. May participate in mechanisms of regulated exocytosis in synapses and certain endocrine cell types. May control the properties of the membrane associated cytoskeleton. In Mus musculus (Mouse), this protein is Amphiphysin (Amph).